We begin with the raw amino-acid sequence, 566 residues long: Poly(A) polymerase pla1 (566 aa).

Residues Y86–S88, D99–D101, D153, K214, Y223, and G232–V233 contribute to the ATP site. D99, D101, and D153 together coordinate Mg(2+). Disordered regions lie at residues H437 to G463 and D530 to A566.

Belongs to the poly(A) polymerase family. Requires Mg(2+) as cofactor. Mn(2+) serves as cofactor.

The protein resides in the nucleus. It carries out the reaction RNA(n) + ATP = RNA(n)-3'-adenine ribonucleotide + diphosphate. In terms of biological role, polymerase that creates the 3'-poly(A) tail of mRNA's. May acquire specificity through interaction with a cleavage and polyadenylation factor (CF I). This Schizosaccharomyces pombe (strain 972 / ATCC 24843) (Fission yeast) protein is Poly(A) polymerase pla1 (pla1).